The sequence spans 63 residues: Protein CYSTEINE-RICH TRANSMEMBRANE MODULE 12 (63 aa).

A disordered region spans residues Met-1 to Phe-34. A helical transmembrane segment spans residues Lys-40–Cys-56.

It belongs to the CYSTM1 family. In terms of assembly, homodimer and heterodimers. Binds weakly to CYSTM4, CYSTM6 and CYSTM7. In terms of tissue distribution, mostly expressed in roots, flowers and siliques and, to a lower extent, in stems and leaves.

The protein localises to the cell membrane. It localises to the cytoplasm. Involved in resistance to abiotic stress. In Arabidopsis thaliana (Mouse-ear cress), this protein is Protein CYSTEINE-RICH TRANSMEMBRANE MODULE 12.